The chain runs to 74 residues: uncharacterized protein (74 aa).

Residues 25–62 (QQTIDRLAGLELRMKQLIRAIEVNNELLRTMQEQQNRV) are a coiled coil.

This is an uncharacterized protein from Bacillus subtilis (strain 168).